A 180-amino-acid polypeptide reads, in one-letter code: CDP-archaeol synthase (180 aa).

A run of 5 helical transmembrane segments spans residues 5-25 (LVATAFWAMLPAYVPNNAAVL), 54-74 (AVGTLTGVVLALALNRIAEPA), 78-98 (LGVDLPTFALPAAFALAFGAM), 118-138 (AFPGLDQLDFVVVALAAVFVV), and 142-162 (WALAVFTPSVLVVVLVMTPIL).

It belongs to the CDP-archaeol synthase family. It depends on Mg(2+) as a cofactor.

The protein localises to the cell membrane. The catalysed reaction is 2,3-bis-O-(geranylgeranyl)-sn-glycerol 1-phosphate + CTP + H(+) = CDP-2,3-bis-O-(geranylgeranyl)-sn-glycerol + diphosphate. Its pathway is membrane lipid metabolism; glycerophospholipid metabolism. In terms of biological role, catalyzes the formation of CDP-2,3-bis-(O-geranylgeranyl)-sn-glycerol (CDP-archaeol) from 2,3-bis-(O-geranylgeranyl)-sn-glycerol 1-phosphate (DGGGP) and CTP. This reaction is the third ether-bond-formation step in the biosynthesis of archaeal membrane lipids. This chain is CDP-archaeol synthase, found in Halorubrum lacusprofundi (strain ATCC 49239 / DSM 5036 / JCM 8891 / ACAM 34).